The chain runs to 277 residues: MVAPSGAMSDSESSSSDSSDAEELARCREAATPAWGLEQRPREAERPAAGTADTQAPAPQPSRRREVNQHDEDGNELQTTPEFRAYVAKKLGALLDSSIAIAEVWKKTQQARLQQEAKEQQEAKEQQAAKEEQAAKKEEDGFRLFFTSVPGGHEKEASPRPCRKRQPPSSSEDSDEELQRCREAAVSASDILQESAIHCPAKVEKEAEKKKLKKKAKKKADADLAAATGLEQVKEAGSVNGDPVLSGTKKKKKKKAKKAREASLCPPAECAAAEPKN.

3 disordered regions span residues 1–81, 108–182, and 238–277; these read MVAP…QTTP, TQQA…QRCR, and SVNG…EPKN. Low complexity predominate over residues 9–18; it reads SDSESSSSDS. Phosphoserine is present on Ser-62. The segment covering 63–72 has biased composition (basic and acidic residues); the sequence is RRREVNQHDE. Phosphothreonine is present on Thr-80. Residues 106 to 141 adopt a coiled-coil conformation; that stretch reads KKTQQARLQQEAKEQQEAKEQQAAKEEQAAKKEEDG. The span at 115–142 shows a compositional bias: basic and acidic residues; it reads QEAKEQQEAKEQQAAKEEQAAKKEEDGF. Ser-158 and Ser-238 each carry phosphoserine. Residues 248 to 258 are compositionally biased toward basic residues; sequence TKKKKKKKAKK. The Nucleolar localization signal (NLS) motif lies at 249–256; the sequence is KKKKKKKA. The span at 265-277 shows a compositional bias: low complexity; that stretch reads CPPAECAAAEPKN.

This sequence belongs to the CUSTOS family.

The protein resides in the nucleus envelope. In terms of biological role, plays a role in the regulation of Wnt signaling pathway during early development. The polypeptide is Protein CUSTOS (Rattus norvegicus (Rat)).